Consider the following 300-residue polypeptide: Acetylglutamate kinase (300 aa).

Substrate contacts are provided by residues 73–74 (GG), arginine 95, and asparagine 197.

It belongs to the acetylglutamate kinase family. ArgB subfamily.

The protein resides in the cytoplasm. The catalysed reaction is N-acetyl-L-glutamate + ATP = N-acetyl-L-glutamyl 5-phosphate + ADP. It participates in amino-acid biosynthesis; L-arginine biosynthesis; N(2)-acetyl-L-ornithine from L-glutamate: step 2/4. Functionally, catalyzes the ATP-dependent phosphorylation of N-acetyl-L-glutamate. The sequence is that of Acetylglutamate kinase from Bordetella bronchiseptica (strain ATCC BAA-588 / NCTC 13252 / RB50) (Alcaligenes bronchisepticus).